Consider the following 844-residue polypeptide: NADPH-Fe(3+) oxidoreductase subunit alpha (844 aa).

Positions 1 to 78 constitute a 2Fe-2S ferredoxin-type domain; sequence MVSLTIDGKD…GIKVTTQSEK (78 aa). Residues cysteine 34, cysteine 45, cysteine 48, and cysteine 62 each contribute to the [2Fe-2S] cluster site. Positions 78 to 117 constitute a 4Fe-4S His(Cys)3-ligated-type domain; it reads KLSRIRQKIMELMLVNHPLDCPVCDAGGECDLQNACYGLG. Positions 94, 98, 101, 107, 146, 149, 152, 186, 189, 192, 196, 222, 225, 229, and 256 each coordinate [4Fe-4S] cluster. 2 4Fe-4S ferredoxin-type domains span residues 137–168 and 177–206; these read PLIESDPNRCILCEKCVKVDHEIVGCNAIRVV and DTVDGNPLNCEFCGNCVAACPTGTLISKPF. Positions 215 to 270 constitute a 4Fe-4S Mo/W bis-MGD-type domain; it reads FTTTPSVCPFCATGCQIEYHSRNGRVERVTSDDSTYNSGNLCINGRFGYSYINSPD.

In terms of assembly, heterotetramer with 2 beta subunits. [4Fe-4S] cluster is required as a cofactor.

The protein localises to the cell inner membrane. With respect to regulation, not regulated by FAD or FMN. The SfrAB enzymatic complex is probably involved in acetate metabolism and does not participate directly in the reduction of Fe(3+) chelates. May serve as a major route for NADP regeneration. The polypeptide is NADPH-Fe(3+) oxidoreductase subunit alpha (sfrA) (Geobacter sulfurreducens (strain DL-1 / KN400)).